The sequence spans 80 residues: Cell division activator CedA (80 aa).

It belongs to the CedA family.

In terms of biological role, activates the cell division inhibited by chromosomal DNA over-replication. The protein is Cell division activator CedA of Escherichia coli O1:K1 / APEC.